A 106-amino-acid chain; its full sequence is Nucleoid-associated protein Exig_0019 (106 aa).

The span at 1 to 16 (MRGMGNMNNMMKQMQK) shows a compositional bias: low complexity. A disordered region spans residues 1-23 (MRGMGNMNNMMKQMQKMQKDMAK).

Belongs to the YbaB/EbfC family. In terms of assembly, homodimer.

It localises to the cytoplasm. It is found in the nucleoid. In terms of biological role, binds to DNA and alters its conformation. May be involved in regulation of gene expression, nucleoid organization and DNA protection. The protein is Nucleoid-associated protein Exig_0019 of Exiguobacterium sibiricum (strain DSM 17290 / CCUG 55495 / CIP 109462 / JCM 13490 / 255-15).